Here is a 290-residue protein sequence, read N- to C-terminus: tRNA dimethylallyltransferase (290 aa).

11–18 contacts ATP; sequence GPTASGKS. 13–18 provides a ligand contact to substrate; it reads TASGKS. Interaction with substrate tRNA stretches follow at residues 36–39 and 158–162; these read DSMQ and QRIVR.

This sequence belongs to the IPP transferase family. As to quaternary structure, monomer. Requires Mg(2+) as cofactor.

It catalyses the reaction adenosine(37) in tRNA + dimethylallyl diphosphate = N(6)-dimethylallyladenosine(37) in tRNA + diphosphate. Catalyzes the transfer of a dimethylallyl group onto the adenine at position 37 in tRNAs that read codons beginning with uridine, leading to the formation of N6-(dimethylallyl)adenosine (i(6)A). The polypeptide is tRNA dimethylallyltransferase (Bartonella tribocorum (strain CIP 105476 / IBS 506)).